The chain runs to 221 residues: Thymine/uracil-DNA glycosylase (221 aa).

The 29-residue stretch at 105–133 (DYGGRVPRNRKAILDLPGVGKYTCAAVMC) folds into the HhH domain. [4Fe-4S] cluster-binding residues include C197, C204, C207, and C213.

It belongs to the Nth/MutY family. [4Fe-4S] cluster is required as a cofactor.

It carries out the reaction Hydrolyzes mismatched double-stranded DNA and polynucleotides, releasing free thymine.. Its function is as follows. DNA glycosylase that excises thymine from T/G mismatches and uracil from U/G mismatches. Acts as a repair enzyme able to counteract the mutagenic effect of spontaneous hydrolytic deamination of DNA 5-methylcytosine (5-meC) residues that leads to the formation of T/G mismatches. May also repair U/G mismatches arising from hydrolytic deamination of DNA cytosine residues. G/G, A/G, T/C and U/C are minor substrates. The sequence is that of Thymine/uracil-DNA glycosylase from Methanothermobacter thermautotrophicus (Methanobacterium thermoformicicum).